The primary structure comprises 855 residues: Cell surface glycoprotein (855 aa).

Positions 1-22 are cleaved as a signal peptide; that stretch reads MTANKQVRAVLLAALMVFSVFA. N-linked (GlcNAc...) asparagine glycans are attached at residues Asn-78, Asn-83, Asn-108, Asn-167, Asn-174, Asn-187, Asn-203, Asn-227, Asn-230, Asn-313, Asn-363, Asn-441, Asn-548, Asn-588, Asn-608, Asn-620, Asn-642, Asn-656, and Asn-754. The span at 782 to 802 shows a compositional bias: low complexity; sequence ETTTAAETTTTEESTETTTTE. The tract at residues 782–831 is disordered; it reads ETTTAAETTTTEESTETTTTEESTEEPTETATATEEPTEEATEETTESST. Acidic residues predominate over residues 817–827; that stretch reads EPTEEATEETT. The chain crosses the membrane as a helical span at residues 831-851; sequence TPGFGVVVALVALVAAALLAV. A PGF sorting signal motif is present at residues 832–834; sequence PGF.

It belongs to the halobacterial S-layer protein family. Post-translationally, glycosylated. Cleaved by the archaeosortase ArtA at the C-terminus, with removal of a short hydrophobic segment. In terms of processing, lipidation.

Its subcellular location is the secreted. It is found in the cell wall. The protein resides in the S-layer. The protein localises to the cell membrane. Its function is as follows. S-layer protein. The S-layer is a paracrystalline mono-layered assembly of proteins which coats the surface of the cell. The sequence is that of Cell surface glycoprotein from Haloferax gibbonsii.